Consider the following 452-residue polypeptide: MSAIKKIHAREVLDSRGNPTVQVEVYTELKGYGSAMVPSGASTGSREALELRDKGSKFESNWFGGKGVMQAVENVNKLIAPALIGFEVTDQRQVDLAMKALDGTKNKEKLGANAILGVSLAVARAAANELDLPLYKYLGGFNAHKLPLPMLNVINGGEHASNTLDFQEFMVMPVGAKSFREALQMANFVFHNLAKLLKKHGHGVQVGDEGGFAPNFKSHEEALDFLVEAIKLSGYKPATSGEKAVAIAMDCASSELYKDGKYTFGKLKKAIEEKQPGFENLGKTKLVYTTDELIDYLDHLVSKYPIVSIEDGLAESDWAGFEKLTKRLGHKLQVVGDDLTVTNTELLAKAIERKAMNSILIKVNQIGSLTETFEAIQMAQMANMTAVVSHRSGETEDTTIADVAVAMNTGQIKTGSMSRTDRIAKYNRLLAIEEELSKASTFPKDVFYNLKK.

Q167 is a binding site for (2R)-2-phosphoglycerate. Catalysis depends on E209, which acts as the Proton donor. Residues D250, E310, and D337 each coordinate Mg(2+). 4 residues coordinate (2R)-2-phosphoglycerate: K362, R391, S392, and K413. K362 (proton acceptor) is an active-site residue.

This sequence belongs to the enolase family. Mg(2+) is required as a cofactor.

It is found in the cytoplasm. The protein resides in the secreted. Its subcellular location is the cell surface. It catalyses the reaction (2R)-2-phosphoglycerate = phosphoenolpyruvate + H2O. It participates in carbohydrate degradation; glycolysis; pyruvate from D-glyceraldehyde 3-phosphate: step 4/5. Its function is as follows. Catalyzes the reversible conversion of 2-phosphoglycerate (2-PG) into phosphoenolpyruvate (PEP). It is essential for the degradation of carbohydrates via glycolysis. This Mycoplasmopsis synoviae (strain 53) (Mycoplasma synoviae) protein is Enolase.